The primary structure comprises 243 residues: Pyridoxine 5'-phosphate synthase (243 aa).

N9 provides a ligand contact to 3-amino-2-oxopropyl phosphate. 11-12 (DH) contributes to the 1-deoxy-D-xylulose 5-phosphate binding site. 3-amino-2-oxopropyl phosphate is bound at residue R20. H45 serves as the catalytic Proton acceptor. Residues R47 and H52 each contribute to the 1-deoxy-D-xylulose 5-phosphate site. Residue E72 is the Proton acceptor of the active site. T102 is a 1-deoxy-D-xylulose 5-phosphate binding site. Catalysis depends on H193, which acts as the Proton donor. Residues G194 and 215 to 216 (GH) contribute to the 3-amino-2-oxopropyl phosphate site.

The protein belongs to the PNP synthase family. In terms of assembly, homooctamer; tetramer of dimers.

It localises to the cytoplasm. The catalysed reaction is 3-amino-2-oxopropyl phosphate + 1-deoxy-D-xylulose 5-phosphate = pyridoxine 5'-phosphate + phosphate + 2 H2O + H(+). Its pathway is cofactor biosynthesis; pyridoxine 5'-phosphate biosynthesis; pyridoxine 5'-phosphate from D-erythrose 4-phosphate: step 5/5. Functionally, catalyzes the complicated ring closure reaction between the two acyclic compounds 1-deoxy-D-xylulose-5-phosphate (DXP) and 3-amino-2-oxopropyl phosphate (1-amino-acetone-3-phosphate or AAP) to form pyridoxine 5'-phosphate (PNP) and inorganic phosphate. The polypeptide is Pyridoxine 5'-phosphate synthase (Shigella sonnei (strain Ss046)).